A 198-amino-acid polypeptide reads, in one-letter code: HTH-type transcriptional regulator BetI (198 aa).

Positions 8 to 68 (PLRRRELIDA…ATMRHLLREL (61 aa)) constitute an HTH tetR-type domain. The H-T-H motif DNA-binding region spans 31–50 (TVAQIAHEAGVSPALAHHYF).

Its pathway is amine and polyamine biosynthesis; betaine biosynthesis via choline pathway [regulation]. Its function is as follows. Repressor involved in the biosynthesis of the osmoprotectant glycine betaine. It represses transcription of the choline transporter BetT and the genes of BetAB involved in the synthesis of glycine betaine. In Brucella melitensis biotype 2 (strain ATCC 23457), this protein is HTH-type transcriptional regulator BetI.